A 472-amino-acid polypeptide reads, in one-letter code: MESLESVDASSGSVGSYMSKSVRKHWWSRKGYHPTGSSKNGSRLKISSDENFQDELVVLDDAFLCNVPLELPSTSNAQKTAAESFSKLSPQDQLLSLQLNNVQESVFQQSTFNLPDALLDPGPASKEKQAVLSIGRPSWLPPKSKEEEKKHMREFEQIKKSAMRYDRQKQKEKIKMVEQKNKRNLYLVNVWEREILRNWPDALKSSRYAGIWRQGIPSRVRGRVWEKAIGNNLKLDYQSFFNARANAQKREAAEKAEQMNNANQFREDVCALELDLQSTMPHYSLFHTEGPLRRDLIGLLRAYSYYRFDTSYIPGTSFIGALLLLNMNLTSAFNCLANLLDKPFLQAVYTQDTSSLKSFYQTFLDTLKKNEPELATHLLIKLELVPDDFVYPLLRKLFIPMVSPEIASRILDCYVFEEDSFFIQLLMAVFKLLKPKLLVDDSRLVLSALLFENWDLGPEDEFMHFVYDISLS.

The 204-residue stretch at 215–418 (GIPSRVRGRV…RILDCYVFEE (204 aa)) folds into the Rab-GAP TBC domain.

The sequence is that of TBC domain-containing protein C23D3.03c from Schizosaccharomyces pombe (strain 972 / ATCC 24843) (Fission yeast).